The chain runs to 597 residues: Aspartate--tRNA(Asp/Asn) ligase (597 aa).

E182 serves as a coordination point for L-aspartate. The interval 206–209 is aspartate; sequence QLFK. R228 serves as a coordination point for L-aspartate. Residues 228-230 and Q237 each bind ATP; that span reads RDE. H456 lines the L-aspartate pocket. E490 provides a ligand contact to ATP. R497 is a binding site for L-aspartate. 542 to 545 provides a ligand contact to ATP; that stretch reads GFDR.

The protein belongs to the class-II aminoacyl-tRNA synthetase family. Type 1 subfamily. In terms of assembly, homodimer.

The protein localises to the cytoplasm. The catalysed reaction is tRNA(Asx) + L-aspartate + ATP = L-aspartyl-tRNA(Asx) + AMP + diphosphate. In terms of biological role, aspartyl-tRNA synthetase with relaxed tRNA specificity since it is able to aspartylate not only its cognate tRNA(Asp) but also tRNA(Asn). Reaction proceeds in two steps: L-aspartate is first activated by ATP to form Asp-AMP and then transferred to the acceptor end of tRNA(Asp/Asn). In Desulfatibacillum aliphaticivorans, this protein is Aspartate--tRNA(Asp/Asn) ligase.